The chain runs to 68 residues: uncharacterized protein (68 aa).

The HMA domain occupies 2–67; it reads KTITLNIKGI…VIEDAGFDAT (66 aa). A metal cation is bound by residues Cys13 and Cys16.

This is an uncharacterized protein from Haemophilus influenzae (strain ATCC 51907 / DSM 11121 / KW20 / Rd).